Reading from the N-terminus, the 201-residue chain is ATP-dependent Clp protease proteolytic subunit 2 (201 aa).

The Nucleophile role is filled by Ser98. The active site involves His123.

The protein belongs to the peptidase S14 family. Fourteen ClpP subunits assemble into 2 heptameric rings which stack back to back to give a disk-like structure with a central cavity, resembling the structure of eukaryotic proteasomes.

The protein resides in the cytoplasm. It carries out the reaction Hydrolysis of proteins to small peptides in the presence of ATP and magnesium. alpha-casein is the usual test substrate. In the absence of ATP, only oligopeptides shorter than five residues are hydrolyzed (such as succinyl-Leu-Tyr-|-NHMec, and Leu-Tyr-Leu-|-Tyr-Trp, in which cleavage of the -Tyr-|-Leu- and -Tyr-|-Trp bonds also occurs).. In terms of biological role, cleaves peptides in various proteins in a process that requires ATP hydrolysis. Has a chymotrypsin-like activity. Plays a major role in the degradation of misfolded proteins. This chain is ATP-dependent Clp protease proteolytic subunit 2, found in Pseudomonas aeruginosa (strain ATCC 15692 / DSM 22644 / CIP 104116 / JCM 14847 / LMG 12228 / 1C / PRS 101 / PAO1).